We begin with the raw amino-acid sequence, 395 residues long: Na(+)/H(+) antiporter NhaA (395 aa).

12 helical membrane passes run 18–38 (AGGILLLVFSVGAVIFANSPL), 64–84 (LLMWVNDGFMAIFFVLVGLEV), 100–120 (IFPAIAACGGMIVPALVYWLV), 129–149 (GGWAIPMATDIAFAIGVLVLL), 160–180 (FLLALAIIDDLGAIIVIALFF), 182–202 (HDLSTKALILASIAIVGLILL), 205–225 (FKVSNLIAYVVVGIILWVSVL), 226–246 (KSGVHATLAGVIIGFCVPLKG), 266–286 (FLILPLFAFCNAGIPLSGLGM), 295–315 (LGVTLGLLLGKPIGVFLFSYL), 333–353 (IFAVSVLCGIGFTMSMFLASL), and 368–388 (LGILFGSSVSAVVGYWLLFVT).

It belongs to the NhaA Na(+)/H(+) (TC 2.A.33) antiporter family.

The protein localises to the cell inner membrane. It catalyses the reaction Na(+)(in) + 2 H(+)(out) = Na(+)(out) + 2 H(+)(in). Functionally, na(+)/H(+) antiporter that extrudes sodium in exchange for external protons. The sequence is that of Na(+)/H(+) antiporter NhaA from Histophilus somni (strain 129Pt) (Haemophilus somnus).